The following is a 361-amino-acid chain: Phosphoserine aminotransferase (361 aa).

L-glutamate is bound at residue R42. Pyridoxal 5'-phosphate is bound by residues 76 to 77 (AR), W102, T153, D173, and Q196. N6-(pyridoxal phosphate)lysine is present on K197. Residue 238-239 (NT) coordinates pyridoxal 5'-phosphate.

It belongs to the class-V pyridoxal-phosphate-dependent aminotransferase family. SerC subfamily. In terms of assembly, homodimer. The cofactor is pyridoxal 5'-phosphate.

The protein localises to the cytoplasm. The enzyme catalyses O-phospho-L-serine + 2-oxoglutarate = 3-phosphooxypyruvate + L-glutamate. It catalyses the reaction 4-(phosphooxy)-L-threonine + 2-oxoglutarate = (R)-3-hydroxy-2-oxo-4-phosphooxybutanoate + L-glutamate. It functions in the pathway amino-acid biosynthesis; L-serine biosynthesis; L-serine from 3-phospho-D-glycerate: step 2/3. It participates in cofactor biosynthesis; pyridoxine 5'-phosphate biosynthesis; pyridoxine 5'-phosphate from D-erythrose 4-phosphate: step 3/5. In terms of biological role, catalyzes the reversible conversion of 3-phosphohydroxypyruvate to phosphoserine and of 3-hydroxy-2-oxo-4-phosphonooxybutanoate to phosphohydroxythreonine. This Yersinia pseudotuberculosis serotype IB (strain PB1/+) protein is Phosphoserine aminotransferase.